The chain runs to 694 residues: Elongation factor G (694 aa).

In terms of domain architecture, tr-type G spans 9-288 (SKIRNIGIMA…VIVKWLPSPK (280 aa)). GTP is bound by residues 18–25 (AHIDAGKT), 82–86 (DTPGH), and 136–139 (NKMD).

Belongs to the TRAFAC class translation factor GTPase superfamily. Classic translation factor GTPase family. EF-G/EF-2 subfamily.

It is found in the cytoplasm. In terms of biological role, catalyzes the GTP-dependent ribosomal translocation step during translation elongation. During this step, the ribosome changes from the pre-translocational (PRE) to the post-translocational (POST) state as the newly formed A-site-bound peptidyl-tRNA and P-site-bound deacylated tRNA move to the P and E sites, respectively. Catalyzes the coordinated movement of the two tRNA molecules, the mRNA and conformational changes in the ribosome. The sequence is that of Elongation factor G from Chlamydia abortus (strain DSM 27085 / S26/3) (Chlamydophila abortus).